A 238-amino-acid chain; its full sequence is Type III pantothenate kinase (238 aa).

6–13 (DSGNTRIK) is an ATP binding site. Substrate-binding positions include Tyr90 and 97–100 (GVDR). The Proton acceptor role is filled by Asp99. An ATP-binding site is contributed by Thr122. Thr172 is a substrate binding site.

This sequence belongs to the type III pantothenate kinase family. Homodimer. Requires NH4(+) as cofactor. K(+) serves as cofactor.

It localises to the cytoplasm. The enzyme catalyses (R)-pantothenate + ATP = (R)-4'-phosphopantothenate + ADP + H(+). It participates in cofactor biosynthesis; coenzyme A biosynthesis; CoA from (R)-pantothenate: step 1/5. Functionally, catalyzes the phosphorylation of pantothenate (Pan), the first step in CoA biosynthesis. The polypeptide is Type III pantothenate kinase (Dechloromonas aromatica (strain RCB)).